The sequence spans 420 residues: Gamma-glutamyl phosphate reductase (420 aa).

It belongs to the gamma-glutamyl phosphate reductase family.

It localises to the cytoplasm. It catalyses the reaction L-glutamate 5-semialdehyde + phosphate + NADP(+) = L-glutamyl 5-phosphate + NADPH + H(+). It participates in amino-acid biosynthesis; L-proline biosynthesis; L-glutamate 5-semialdehyde from L-glutamate: step 2/2. In terms of biological role, catalyzes the NADPH-dependent reduction of L-glutamate 5-phosphate into L-glutamate 5-semialdehyde and phosphate. The product spontaneously undergoes cyclization to form 1-pyrroline-5-carboxylate. In Streptococcus pneumoniae serotype 2 (strain D39 / NCTC 7466), this protein is Gamma-glutamyl phosphate reductase.